The primary structure comprises 562 residues: Protein wntless (562 aa).

At 1-15 (MSGTILENLSGRKLS) the chain is on the cytoplasmic side. A helical transmembrane segment spans residues 16–36 (ILVSSLMLCQVVCFLMGGLFA). Residues 37–239 (PVPAGHQTVL…AIHQNGGFTQ (203 aa)) are Lumenal-facing. Residues Asn58 and Asn103 are each glycosylated (N-linked (GlcNAc...) asparagine). The chain crosses the membrane as a helical span at residues 240–260 (VWLVLKTLLFPFVIGIMMWFW). Residues 261–275 (RRVHILQRSPALLEY) are Cytoplasmic-facing. The helical transmembrane segment at 276-296 (MLFYLGGALSFLNLPLELLTL) threads the bilayer. Over 297-311 (GVEMPYMLLLSDVRQ) the chain is Lumenal. Residues 312-332 (GIFYAMLLSFWLVFAGEHMLI) traverse the membrane as a helical segment. At 333-344 (QDSPSKSTIRSR) the chain is on the cytoplasmic side. The helical transmembrane segment at 345-365 (YWKHLSAVVVGCISLFVFDIC) threads the bilayer. The Lumenal portion of the chain corresponds to 366 to 390 (ERGVQMRNPFYSIWTTPLGAKVAMS). The chain crosses the membrane as a helical span at residues 391 to 411 (FIVLAGVSAAIYFLFLCFMVW). Topologically, residues 412 to 441 (KVFKDIGDKRTSLPSMSQARRLHYEGLIYR) are cytoplasmic. The helical transmembrane segment at 442 to 462 (FKFLMLATLLCAGLTVAGFIM) threads the bilayer. Over 463–482 (GQMAEGHWKWNENIEIQLTS) the chain is Lumenal. Residues 483-503 (AFLTGVYGMWNIYIFALIILY) traverse the membrane as a helical segment. Topologically, residues 504–562 (APSHKQWPTMRHSDETTQSNENIVASAASEEIEFSNLPSDSNPSEISSLTSFTRKVAFD) are cytoplasmic.

Belongs to the wntless family. In terms of assembly, interacts with wg; in the Golgi. Interacts with Vps35, a component of the retromer complex; wls stability is regulated by Vps35.

The protein resides in the presynaptic cell membrane. It is found in the postsynaptic cell membrane. It localises to the cell membrane. The protein localises to the endoplasmic reticulum membrane. Its subcellular location is the endosome membrane. The protein resides in the golgi apparatus membrane. Its function is as follows. A segment polarity gene required for wingless (wg)-dependent patterning processes, acting in both wg-sending cells and wg-target cells. In non-neuronal cells wls directs wg secretion. The wls traffic loop encompasses the Golgi, the cell surface, an endocytic compartment and a retrograde route leading back to the Golgi, and involves clathrin-mediated endocytosis and the retromer complex (a conserved protein complex consisting of Vps35 and Vps26). In neuronal cells (the larval motorneuron NMJ), the wg signal moves across the synapse via the release of wls-containing exosome-like vesicles. Postsynaptic wls is required for the trafficking of fz2 through the fz2-interacting protein Grip. The sequence is that of Protein wntless from Drosophila grimshawi (Hawaiian fruit fly).